Reading from the N-terminus, the 352-residue chain is Protein CIA1 (352 aa).

WD repeat units follow at residues 18–64 (GHTD…RSWT), 72–111 (THTRTVRSCAWSPSGQLLATASFDGTTGIWKNYGSEFECI), 116–155 (GHENEVKSVSWNASGSCLATCSRDKSVWIWEVLEGNEYDC), 161–200 (GHTQDVKMVQWHPTMDVLFSCSYDNTIKVWWSEDDDGEYQ), 211–250 (GHSSTVWSISFNAAGDKMVTCSDDLTLKIWGTDIAKMQSG), 265–303 (YHDRTIYSAHWSRDDIIASGAGDNAIRLFVDSKHDSVDG), and 315–352 (AHENDVNSVQWSPGEGNRLLASASDDGMVKIWQLATKP).

This sequence belongs to the WD repeat CIA1 family. In terms of assembly, part of a complex composed of AE7, CIA1, MMS19 and NAR1. Interacts with AE7 and NAR1.

It localises to the nucleus. The protein localises to the cytoplasm. Functionally, essential component of the cytosolic iron-sulfur (Fe-S) protein assembly (CIA) machinery. Required for the maturation of extramitochondrial Fe/S proteins. This chain is Protein CIA1, found in Arabidopsis thaliana (Mouse-ear cress).